The primary structure comprises 557 residues: Tripeptidyl-peptidase 1 (557 aa).

Positions 1–16 are cleaved as a signal peptide; the sequence is MRVAVFVLSFIWLVNG. The propeptide at 17–190 is removed in mature form; that stretch reads ELLEADQDAV…WEGARQAILG (174 aa). A glycan (N-linked (GlcNAc...) asparagine) is linked at Asn53. Cys107 and Cys118 form a disulfide bridge. Residues 194-557 enclose the Peptidase S53 domain; the sequence is GVTPAVIRNR…YPVFLASLMD (364 aa). N-linked (GlcNAc...) asparagine glycans are attached at residues Asn205 and Asn216. Active-site charge relay system residues include Glu266 and Asp270. Residues Asn280, Asn307, and Asn438 are each glycosylated (N-linked (GlcNAc...) asparagine). 2 disulfides stabilise this stretch: Cys359–Cys521 and Cys517–Cys532. The Charge relay system role is filled by Ser470. Residues Asp512 and Val513 each contribute to the Ca(2+) site. Residue Asp538 participates in Ca(2+) binding.

Ca(2+) serves as cofactor. Activated by autocatalytic proteolytical processing.

It localises to the lysosome. It carries out the reaction Release of an N-terminal tripeptide from a polypeptide, but also has endopeptidase activity.. Functionally, lysosomal serine protease with tripeptidyl-peptidase I activity. May act as a non-specific lysosomal peptidase which generates tripeptides from the breakdown products produced by lysosomal proteinases. Requires substrates with an unsubstituted N-terminus. The polypeptide is Tripeptidyl-peptidase 1 (Danio rerio (Zebrafish)).